We begin with the raw amino-acid sequence, 475 residues long: Aspartyl/glutamyl-tRNA(Asn/Gln) amidotransferase subunit B (475 aa).

Belongs to the GatB/GatE family. GatB subfamily. As to quaternary structure, heterotrimer of A, B and C subunits.

It catalyses the reaction L-glutamyl-tRNA(Gln) + L-glutamine + ATP + H2O = L-glutaminyl-tRNA(Gln) + L-glutamate + ADP + phosphate + H(+). The catalysed reaction is L-aspartyl-tRNA(Asn) + L-glutamine + ATP + H2O = L-asparaginyl-tRNA(Asn) + L-glutamate + ADP + phosphate + 2 H(+). Functionally, allows the formation of correctly charged Asn-tRNA(Asn) or Gln-tRNA(Gln) through the transamidation of misacylated Asp-tRNA(Asn) or Glu-tRNA(Gln) in organisms which lack either or both of asparaginyl-tRNA or glutaminyl-tRNA synthetases. The reaction takes place in the presence of glutamine and ATP through an activated phospho-Asp-tRNA(Asn) or phospho-Glu-tRNA(Gln). This chain is Aspartyl/glutamyl-tRNA(Asn/Gln) amidotransferase subunit B, found in Staphylococcus aureus (strain COL).